Consider the following 387-residue polypeptide: MATTKSFLILIVMILATTSSTFASLEEMVTVLSIDGGGIKGIIPGTILEFLEGQLQKMDNNADARLADYFDVIGGTSTGGLLTSMITTPNENNRPFAAANEIVPFFFEHGPHIFNSSTGQFFGPKYDGKYLMQVLQENLGETRVHQALTEVAISSFDIKTNKPVIFTKSDLAKSPELDAKMYDICYSTAAAPTYFPPHYFTTNTINGDKYEFNLVDGAVATVADPALLSISVATRLAEKDPAFASIRSLNYKKMLLLSLGTGTTSEFDKTYTAEETAKWGAIQWMLVIQRMTDAASSYMTDYYLSTVFQAQNSQKNYLRVQENALTGTTTEMDDASEANMESLVQVGENLLKKPVSKDNPETYEEALKRFAKLLSDRKKLRANKASY.

The N-terminal stretch at 1-23 is a signal peptide; sequence MATTKSFLILIVMILATTSSTFA. Residues 32 to 230 enclose the PNPLA domain; that stretch reads LSIDGGGIKG…TVADPALLSI (199 aa). A GXGXXG motif is present at residues 36–41; that stretch reads GGGIKG. Residues 75–79 carry the GXSXG motif; sequence GTSTG. Catalysis depends on Ser77, which acts as the Nucleophile. A glycan (N-linked (GlcNAc...) asparagine) is linked at Asn115. Catalysis depends on Asp216, which acts as the Proton acceptor. The short motif at 216 to 218 is the DGA/G element; that stretch reads DGA. Positions 361–385 form a coiled coil; it reads ETYEEALKRFAKLLSDRKKLRANKA.

This sequence belongs to the patatin family. In terms of tissue distribution, tuber.

The protein localises to the vacuole. Its function is as follows. Probable lipolytic acyl hydrolase (LAH), an activity which is thought to be involved in the response of tubers to pathogens. This is Patatin group D-2 from Solanum tuberosum (Potato).